The sequence spans 125 residues: Transposase for transposon Tn554 (125 aa).

One of three proteins encoded by transposon Tn554 required for its transposition. The chain is Transposase for transposon Tn554 (tnpC1) from Staphylococcus aureus (strain Mu50 / ATCC 700699).